The primary structure comprises 122 residues: Biogenesis of lysosome-related organelles complex 1 subunit BLS1 (122 aa).

Ser-33 carries the post-translational modification Phosphoserine.

The protein belongs to the BLOC1S1 family. Component of the biogenesis of lysosome-related organelles complex-1 (BLOC-1) composed of at least BLI1, BLS1, CNL1, KXD1, SNN1 and VAB2.

It localises to the endosome. Its function is as follows. Component of the biogenesis of lysosome-related organelles complex-1 (BLOC-1), a complex involved in endosomal cargo sorting. The sequence is that of Biogenesis of lysosome-related organelles complex 1 subunit BLS1 (BLS1) from Saccharomyces cerevisiae (strain YJM789) (Baker's yeast).